The chain runs to 188 residues: Peptidyl-tRNA hydrolase (188 aa).

Tyrosine 14 contacts tRNA. The Proton acceptor role is filled by histidine 19. TRNA is bound by residues tyrosine 60 and asparagine 62.

It belongs to the PTH family. Monomer.

The protein resides in the cytoplasm. It catalyses the reaction an N-acyl-L-alpha-aminoacyl-tRNA + H2O = an N-acyl-L-amino acid + a tRNA + H(+). In terms of biological role, hydrolyzes ribosome-free peptidyl-tRNAs (with 1 or more amino acids incorporated), which drop off the ribosome during protein synthesis, or as a result of ribosome stalling. Its function is as follows. Catalyzes the release of premature peptidyl moieties from peptidyl-tRNA molecules trapped in stalled 50S ribosomal subunits, and thus maintains levels of free tRNAs and 50S ribosomes. The chain is Peptidyl-tRNA hydrolase from Mycoplasmopsis agalactiae (strain NCTC 10123 / CIP 59.7 / PG2) (Mycoplasma agalactiae).